A 139-amino-acid chain; its full sequence is MRIMGLDVGSKTVGVAISDPLGFTAQGXEIIQINEEQGQFGFDRVKELVDTYKVERFVVGLPKNMNNTSGPRVEASQAYGAKLEEFFGLPVDYQDERLTTVAAERMLIEQADISRNKRKKVIDKLAAQLILQNYLDRKF.

Belongs to the YqgF nuclease family.

Its subcellular location is the cytoplasm. Its function is as follows. Could be a nuclease involved in processing of the 5'-end of pre-16S rRNA. This chain is Putative pre-16S rRNA nuclease, found in Streptococcus pneumoniae serotype 19F (strain G54).